A 97-amino-acid chain; its full sequence is UPF0235 protein LHK_03181 (97 aa).

The protein belongs to the UPF0235 family.

The polypeptide is UPF0235 protein LHK_03181 (Laribacter hongkongensis (strain HLHK9)).